Reading from the N-terminus, the 126-residue chain is Adenosine 5'-monophosphoramidase HINT1 (126 aa).

The residue at position 2 (Ala2) is an N-acetylalanine. An HIT domain is found at 18 to 126 (IFGKIIRKEI…GGRQMNWPPG (109 aa)). An N6-acetyllysine mark is found at Lys21 and Lys30. 43–44 (DI) lines the AMP pocket. A phosphoserine mark is found at Ser45 and Ser72. AMP contacts are provided by residues Asn99, 105 to 107 (GQS), and 112 to 114 (HLH). Residues 110–114 (HVHLH) carry the Histidine triad motif motif. The active-site Tele-AMP-histidine intermediate is His112.

Belongs to the HINT family. As to quaternary structure, homodimer. Interacts with CDK7. Interacts with RUVBL1 and RUVBL2 and is associated with the LEF1/TCF1-CTNNB1 complex and with a KAT5 histone acetyltransferase complex. Identified in a complex with MITF and CTNNB1. Interacts with CDC34 and RBX1, and is part of a SCF (SKP2-CUL1-F-box protein) E3 ubiquitin-protein ligase complex. Interacts with SUMO1, SUMO2 and RGS17. Interacts with the Ten-1 ICD form of TENM1. Interacts with CALM1; interaction increases in the presence of calcium ions. Widely expressed.

It is found in the cytoplasm. Its subcellular location is the nucleus. It catalyses the reaction adenosine 5'-phosphoramidate + H2O = AMP + NH4(+). Exhibits adenosine 5'-monophosphoramidase activity, hydrolyzing purine nucleotide phosphoramidates with a single phosphate group such as adenosine 5'monophosphoramidate (AMP-NH2) to yield AMP and NH2. Hydrolyzes adenosine 5'monophosphomorpholidate (AMP-morpholidate) and guanosine 5'monophosphomorpholidate (GMP-morpholidate). Hydrolyzes lysyl-AMP (AMP-N-epsilon-(N-alpha-acetyl lysine methyl ester)) generated by lysine tRNA ligase, as well as Met-AMP, His-AMP and Asp-AMP, lysyl-GMP (GMP-N-epsilon-(N-alpha-acetyl lysine methyl ester)) and AMP-N-alanine methyl ester. Can also convert adenosine 5'-O-phosphorothioate and guanosine 5'-O-phosphorothioate to the corresponding nucleoside 5'-O-phosphates with concomitant release of hydrogen sulfide. In addition, functions as a scaffolding protein that modulates transcriptional activation by the LEF1/TCF1-CTNNB1 complex and by the complex formed with MITF and CTNNB1. Modulates p53/TP53 levels and p53/TP53-mediated apoptosis. Modulates proteasomal degradation of target proteins by the SCF (SKP2-CUL1-F-box protein) E3 ubiquitin-protein ligase complex. Also exhibits SUMO-specific isopeptidase activity, deconjugating SUMO1 from RANGAP1 and RGS17. In Bos taurus (Bovine), this protein is Adenosine 5'-monophosphoramidase HINT1 (HINT1).